Consider the following 136-residue polypeptide: Mite allergen Der f 21.0101 (136 aa).

The signal sequence occupies residues Met1 to Gly17.

The protein belongs to the mite group 5 allergen family. As to quaternary structure, monomer. Homodimer. Highly expressed in foregut (stomach), midgut and hindgut. Not expressed in body wall, reproductive system or body cavity.

In Dermatophagoides farinae (American house dust mite), this protein is Mite allergen Der f 21.0101.